The following is a 314-amino-acid chain: DNA-directed RNA polymerase subunit alpha (314 aa).

An alpha N-terminal domain (alpha-NTD) region spans residues 1 to 227 (MIEFQKPTIS…EHLALFIDLS (227 aa)). The tract at residues 241–314 (VETVMENKEP…GQSFKQETEN (74 aa)) is alpha C-terminal domain (alpha-CTD).

The protein belongs to the RNA polymerase alpha chain family. In terms of assembly, homodimer. The RNAP catalytic core consists of 2 alpha, 1 beta, 1 beta' and 1 omega subunit. When a sigma factor is associated with the core the holoenzyme is formed, which can initiate transcription.

It carries out the reaction RNA(n) + a ribonucleoside 5'-triphosphate = RNA(n+1) + diphosphate. Functionally, DNA-dependent RNA polymerase catalyzes the transcription of DNA into RNA using the four ribonucleoside triphosphates as substrates. This chain is DNA-directed RNA polymerase subunit alpha, found in Oenococcus oeni (strain ATCC BAA-331 / PSU-1).